We begin with the raw amino-acid sequence, 180 residues long: uncharacterized protein (180 aa).

Transmembrane regions (helical) follow at residues 4-24 (KSNIKLILATDLLAVLILSLF), 25-45 (IKNFKMVLAFLLAVFVIWLFI), 57-77 (NLLAMSVGFIEGILIFLGIIY), 81-101 (FLDITLGIFAILILIVMGILF), 124-144 (FLTLISIFGMLLTIYVFLLIL), and 156-176 (IIRTIMLVITANMFIIEFYTF).

It localises to the cell membrane. This is an uncharacterized protein from Methanocaldococcus jannaschii (strain ATCC 43067 / DSM 2661 / JAL-1 / JCM 10045 / NBRC 100440) (Methanococcus jannaschii).